A 243-amino-acid polypeptide reads, in one-letter code: Ribosomal RNA small subunit methyltransferase G (243 aa).

Residues glycine 82, phenylalanine 87, 133 to 134 (AE), and arginine 152 contribute to the S-adenosyl-L-methionine site.

This sequence belongs to the methyltransferase superfamily. RNA methyltransferase RsmG family.

It localises to the cytoplasm. Specifically methylates the N7 position of a guanine in 16S rRNA. The chain is Ribosomal RNA small subunit methyltransferase G from Clostridium novyi (strain NT).